A 341-amino-acid chain; its full sequence is Glycerol-3-phosphate dehydrogenase [NAD(P)+] (341 aa).

4 residues coordinate NADPH: S14, F15, R35, and K108. 2 residues coordinate sn-glycerol 3-phosphate: K108 and G136. A140 is an NADPH binding site. Sn-glycerol 3-phosphate contacts are provided by K191, D244, S254, R255, and N256. The Proton acceptor role is filled by K191. Residue R255 participates in NADPH binding. Residues V279 and E281 each contribute to the NADPH site.

It belongs to the NAD-dependent glycerol-3-phosphate dehydrogenase family.

The protein localises to the cytoplasm. It catalyses the reaction sn-glycerol 3-phosphate + NAD(+) = dihydroxyacetone phosphate + NADH + H(+). The catalysed reaction is sn-glycerol 3-phosphate + NADP(+) = dihydroxyacetone phosphate + NADPH + H(+). It functions in the pathway membrane lipid metabolism; glycerophospholipid metabolism. Functionally, catalyzes the reduction of the glycolytic intermediate dihydroxyacetone phosphate (DHAP) to sn-glycerol 3-phosphate (G3P), the key precursor for phospholipid synthesis. The polypeptide is Glycerol-3-phosphate dehydrogenase [NAD(P)+] (Pseudomonas savastanoi pv. phaseolicola (strain 1448A / Race 6) (Pseudomonas syringae pv. phaseolicola (strain 1448A / Race 6))).